We begin with the raw amino-acid sequence, 225 residues long: MKHVLKNDWGLLLAPEFEKEYYRELDVFLKEEYSIHVVYPKIEDIFNALEYTSYENTKVVILGQDPYHGPNQAHGLSFSVQPGVKTPPSLLNMYKELRDEYGYDIPNNGYLVKWAEQGVLLLNTVLTVRQGEANSHKGKGWEHFTDRVIELLNEREKPVIFILWGRHAQAKKKLITNSNHHIIESVHPSPLSARRGFFGSKPYSKVNTILANMGEREIDWEIPNL.

Aspartate 65 serves as the catalytic Proton acceptor.

Belongs to the uracil-DNA glycosylase (UDG) superfamily. UNG family.

It localises to the cytoplasm. It carries out the reaction Hydrolyzes single-stranded DNA or mismatched double-stranded DNA and polynucleotides, releasing free uracil.. In terms of biological role, excises uracil residues from the DNA which can arise as a result of misincorporation of dUMP residues by DNA polymerase or due to deamination of cytosine. The polypeptide is Uracil-DNA glycosylase (Bacillus thuringiensis subsp. konkukian (strain 97-27)).